A 98-amino-acid polypeptide reads, in one-letter code: Co-chaperonin GroES (98 aa).

This sequence belongs to the GroES chaperonin family. Heptamer of 7 subunits arranged in a ring. Interacts with the chaperonin GroEL.

It is found in the cytoplasm. In terms of biological role, together with the chaperonin GroEL, plays an essential role in assisting protein folding. The GroEL-GroES system forms a nano-cage that allows encapsulation of the non-native substrate proteins and provides a physical environment optimized to promote and accelerate protein folding. GroES binds to the apical surface of the GroEL ring, thereby capping the opening of the GroEL channel. The protein is Co-chaperonin GroES of Beutenbergia cavernae (strain ATCC BAA-8 / DSM 12333 / CCUG 43141 / JCM 11478 / NBRC 16432 / NCIMB 13614 / HKI 0122).